The following is a 1143-amino-acid chain: ATP-dependent helicase/deoxyribonuclease subunit B (1143 aa).

In terms of domain architecture, UvrD-like helicase ATP-binding spans 1 to 274 (MNYMHLGRAG…YGQTVKFQST (274 aa)). Residue 7 to 14 (GRAGTGKT) coordinates ATP. Residues 267 to 565 (QTVKFQSTGL…RFSLVPPSLD (299 aa)) enclose the UvrD-like helicase C-terminal domain. [4Fe-4S] cluster-binding residues include C782, C1104, C1107, and C1113.

The protein belongs to the helicase family. AddB/RexB type 1 subfamily. As to quaternary structure, heterodimer of AddA and AddB. It depends on Mg(2+) as a cofactor. The cofactor is [4Fe-4S] cluster.

The heterodimer acts as both an ATP-dependent DNA helicase and an ATP-dependent, dual-direction single-stranded exonuclease. Recognizes the chi site generating a DNA molecule suitable for the initiation of homologous recombination. The AddB subunit has 5' -&gt; 3' nuclease activity but not helicase activity. The chain is ATP-dependent helicase/deoxyribonuclease subunit B from Exiguobacterium sibiricum (strain DSM 17290 / CCUG 55495 / CIP 109462 / JCM 13490 / 255-15).